Reading from the N-terminus, the 257-residue chain is uncharacterized protein (257 aa).

Residues 1 to 22 form the signal peptide; it reads MGYLKRFALYISVMILIFAIAG. Cys-23 is lipidated: N-palmitoyl cysteine. Residue Cys-23 is the site of S-diacylglycerol cysteine attachment.

Belongs to the staphylococcal tandem lipoprotein family.

Its subcellular location is the cell membrane. This is an uncharacterized protein from Staphylococcus aureus (strain USA300).